Consider the following 252-residue polypeptide: Undecaprenyl-diphosphatase (252 aa).

The next 7 membrane-spanning stretches (helical) occupy residues 1-21 (MTTLEAVILGIVEGLTEFLPI), 42-62 (HKAFEVSIQLGSILAVVFLYF), 74-94 (ILIAFIPTGILGFVLYKIIKS), 95-115 (LFNPYIVVFMLVFGGLLLILI), 172-192 (AAEFSFMLAVPTMFMATFYDV), 206-226 (NLIVGFVVAFISALFAIKWLL), and 232-252 (HSFIPFGIYRIILGILYYLWY).

This sequence belongs to the UppP family.

The protein resides in the cell inner membrane. The catalysed reaction is di-trans,octa-cis-undecaprenyl diphosphate + H2O = di-trans,octa-cis-undecaprenyl phosphate + phosphate + H(+). Functionally, catalyzes the dephosphorylation of undecaprenyl diphosphate (UPP). Confers resistance to bacitracin. The polypeptide is Undecaprenyl-diphosphatase (Sulfurihydrogenibium sp. (strain YO3AOP1)).